Reading from the N-terminus, the 127-residue chain is Protein translocase subunit SecE (127 aa).

The Cytoplasmic segment spans residues 1–19 (MSANTEAQGSGRGLEAMKW). The chain crosses the membrane as a helical span at residues 20–32 (VVVVALLLVAIVG). The Periplasmic segment spans residues 33 to 48 (NYLYRDIMLPLRALAV). A helical membrane pass occupies residues 49–60 (VILIAAAGGVAL). The Cytoplasmic segment spans residues 61–97 (LTTKGKATVAFAREARTEVRKVIWPTRQETLHTTLIV). A helical transmembrane segment spans residues 98-115 (AAVTAVMSLILWGLDGIL). Topologically, residues 116-127 (VRLVSFITGLRF) are periplasmic.

Belongs to the SecE/SEC61-gamma family. As to quaternary structure, component of the Sec protein translocase complex. Heterotrimer consisting of SecY, SecE and SecG subunits. The heterotrimers can form oligomers, although 1 heterotrimer is thought to be able to translocate proteins. Interacts with the ribosome. Interacts with SecDF, and other proteins may be involved. Interacts with SecA.

Its subcellular location is the cell inner membrane. Essential subunit of the Sec protein translocation channel SecYEG. Clamps together the 2 halves of SecY. May contact the channel plug during translocation. In Escherichia coli O157:H7, this protein is Protein translocase subunit SecE.